Reading from the N-terminus, the 364-residue chain is Peroxisomal membrane protein PEX16 (364 aa).

Residue Ser-200 is modified to Phosphoserine.

The protein belongs to the peroxin-16 family.

It localises to the peroxisome membrane. Its function is as follows. Involved in the biogenesis of peroxisomes. This Schizosaccharomyces pombe (strain 972 / ATCC 24843) (Fission yeast) protein is Peroxisomal membrane protein PEX16 (pex16).